We begin with the raw amino-acid sequence, 217 residues long: Formate dehydrogenase, nitrate-inducible, cytochrome b556(Fdn) subunit (217 aa).

Over 1–11 the chain is Cytoplasmic; it reads MSKSKMIVRTK. A helical transmembrane segment spans residues 12–36; sequence FIDRACHWTVVICFFLVALSGISFF. H18 provides a ligand contact to heme b. The Periplasmic portion of the chain corresponds to 37-52; it reads FPTLQWLTQTFGTPQM. A helical transmembrane segment spans residues 53–74; that stretch reads GRILHPFFGIAIFVALMFMFVR. Residue H57 coordinates heme b. At 75–110 the chain is on the cytoplasmic side; the sequence is FVHHNIPDKKDIPWLLNIVEVLKGNEHKVADVGKYN. Residues 111–134 traverse the membrane as a helical segment; that stretch reads AGQKMMFWSIMSMIFVLLVTGVII. Over 135-150 the chain is Periplasmic; that stretch reads WRPYFAQYFPMQVVRY. Residues 151–175 traverse the membrane as a helical segment; the sequence is SLLIHAAAGIILIHAILIHMYMAFW. Residues H155 and H169 each contribute to the heme b site. An a menaquinone-binding site is contributed by H169. Topologically, residues 176 to 217 are cytoplasmic; sequence VKGSIKGMIEGKVSRRWAKKHHPRWYREIEKAEAKKESEEGI.

It belongs to the formate dehydrogenase gamma subunit family. In terms of assembly, trimer of heterotrimers, consisting of subunits alpha, beta and gamma. Requires heme as cofactor.

The protein resides in the cell inner membrane. Functionally, formate dehydrogenase allows the bacterium to use formate as major electron donor during anaerobic respiration, when nitrate is used as electron acceptor. Subunit gamma is the cytochrome b556 component of the formate dehydrogenase-N, and also contains a menaquinone reduction site that receives electrons from the beta subunit (FdnH), through its hemes. Formate dehydrogenase-N is part of a system that generates proton motive force, together with the dissimilatory nitrate reductase (Nar). The polypeptide is Formate dehydrogenase, nitrate-inducible, cytochrome b556(Fdn) subunit (fdnI) (Escherichia coli O157:H7).